The chain runs to 209 residues: dITP/XTP pyrophosphatase (209 aa).

7–12 serves as a coordination point for substrate; sequence SSHGYK. Asp-70 serves as the catalytic Proton acceptor. Position 70 (Asp-70) interacts with Mg(2+). Residues Ser-71, 154 to 157, Lys-177, and 182 to 183 each bind substrate; these read FGYD and HR.

The protein belongs to the HAM1 NTPase family. In terms of assembly, homodimer. Mg(2+) serves as cofactor.

The catalysed reaction is XTP + H2O = XMP + diphosphate + H(+). It catalyses the reaction dITP + H2O = dIMP + diphosphate + H(+). It carries out the reaction ITP + H2O = IMP + diphosphate + H(+). In terms of biological role, pyrophosphatase that catalyzes the hydrolysis of nucleoside triphosphates to their monophosphate derivatives, with a high preference for the non-canonical purine nucleotides XTP (xanthosine triphosphate), dITP (deoxyinosine triphosphate) and ITP. Seems to function as a house-cleaning enzyme that removes non-canonical purine nucleotides from the nucleotide pool, thus preventing their incorporation into DNA/RNA and avoiding chromosomal lesions. The protein is dITP/XTP pyrophosphatase of Chlamydia trachomatis serovar L2 (strain ATCC VR-902B / DSM 19102 / 434/Bu).